A 140-amino-acid chain; its full sequence is IQNPDPAVYQLRDSKSSDKSVCLFTDFDSQTNVSQSKDSDVYITDKTVLDMRSMDFKSNSAVAWSNKSDFACANAFNNSIIPEDTFFPSPESSCDVKLVEKSFETDTNLNFQNLSVIGFRILLLKVAGFNLLMTLRLWSS.

One can recognise an Ig-like C1-type domain in the interval 19 to 107; that stretch reads KSVCLFTDFD…LVEKSFETDT (89 aa). Cys-22 and Cys-72 are disulfide-bonded. Asn-32, Asn-66, Asn-77, and Asn-113 each carry an N-linked (GlcNAc...) asparagine glycan. The interval 94 to 115 is connecting peptide; that stretch reads CDVKLVEKSFETDTNLNFQNLS. Residues 116 to 138 form a helical membrane-spanning segment; the sequence is VIGFRILLLKVAGFNLLMTLRLW. Residues 139-140 are Cytoplasmic-facing; that stretch reads SS.

Alpha-beta TR is a heterodimer composed of an alpha and beta chain; disulfide-linked. The alpha-beta TR is associated with the transmembrane signaling CD3 coreceptor proteins to form the TR-CD3 (TcR or TCR). The assembly of alpha-beta TR heterodimers with CD3 occurs in the endoplasmic reticulum where a single alpha-beta TR heterodimer associates with one CD3D-CD3E heterodimer, one CD3G-CD3E heterodimer and one CD247 homodimer forming a stable octameric structure. CD3D-CD3E and CD3G-CD3E heterodimers preferentially associate with TR alpha and TR beta chains, respectively. The association of the CD247 homodimer is the last step of TcR assembly in the endoplasmic reticulum and is required for transport to the cell surface.

The protein resides in the cell membrane. Its function is as follows. Constant region of T cell receptor (TR) alpha chain. Alpha-beta T cell receptors are antigen specific receptors which are essential to the immune response and are present on the cell surface of T lymphocytes. Recognize peptide-major histocompatibility (MH) (pMH) complexes that are displayed by antigen presenting cells (APC), a prerequisite for efficient T cell adaptive immunity against pathogens. Binding of alpha-beta TR to pMH complex initiates TR-CD3 clustering on the cell surface and intracellular activation of LCK that phosphorylates the ITAM motifs of CD3G, CD3D, CD3E and CD247 enabling the recruitment of ZAP70. In turn, ZAP70 phosphorylates LAT, which recruits numerous signaling molecules to form the LAT signalosome. The LAT signalosome propagates signal branching to three major signaling pathways, the calcium, the mitogen-activated protein kinase (MAPK) kinase and the nuclear factor NF-kappa-B (NF-kB) pathways, leading to the mobilization of transcription factors that are critical for gene expression and essential for T cell growth and differentiation. The T cell repertoire is generated in the thymus, by V-(D)-J rearrangement. This repertoire is then shaped by intrathymic selection events to generate a peripheral T cell pool of self-MH restricted, non-autoaggressive T cells. Post-thymic interaction of alpha-beta TR with the pMH complexes shapes TR structural and functional avidity. The chain is T cell receptor alpha chain constant from Homo sapiens (Human).